The sequence spans 946 residues: RIPOR family member 3 (946 aa).

3 positions are modified to phosphoserine: Ser9, Ser24, and Ser340. Thr345 is modified (phosphothreonine). Phosphoserine occurs at positions 351 and 384. Residues 390-512 (GPSLRSQSQE…GDREDGPGVA (123 aa)) form a disordered region. Positions 437 to 446 (SIEEEAREDP) are enriched in basic and acidic residues. The span at 478-495 (SLPQGSLFHSGTASSSQN) shows a compositional bias: polar residues. A compositionally biased stretch (basic and acidic residues) spans 496–508 (GHEEGATGDREDG).

It belongs to the RIPOR family.

This chain is RIPOR family member 3, found in Homo sapiens (Human).